A 213-amino-acid polypeptide reads, in one-letter code: Uridine kinase (213 aa).

Glycine 12–threonine 19 serves as a coordination point for ATP.

Belongs to the uridine kinase family.

It localises to the cytoplasm. It catalyses the reaction uridine + ATP = UMP + ADP + H(+). The catalysed reaction is cytidine + ATP = CMP + ADP + H(+). The protein operates within pyrimidine metabolism; CTP biosynthesis via salvage pathway; CTP from cytidine: step 1/3. Its pathway is pyrimidine metabolism; UMP biosynthesis via salvage pathway; UMP from uridine: step 1/1. In Mycoplasma genitalium (strain ATCC 33530 / DSM 19775 / NCTC 10195 / G37) (Mycoplasmoides genitalium), this protein is Uridine kinase (udk).